The primary structure comprises 124 residues: Fluoride-specific ion channel FluC (124 aa).

4 helical membrane-spanning segments follow: residues 1-21, 34-54, 62-82, and 101-121; these read MIGV…LRFA, FYAA…YLYG, VPLA…TTFS, and FSYL…GLIL. Positions 76 and 79 each coordinate Na(+).

This sequence belongs to the fluoride channel Fluc/FEX (TC 1.A.43) family.

It is found in the cell inner membrane. It catalyses the reaction fluoride(in) = fluoride(out). Na(+) is not transported, but it plays an essential structural role and its presence is essential for fluoride channel function. In terms of biological role, fluoride-specific ion channel. Important for reducing fluoride concentration in the cell, thus reducing its toxicity. This chain is Fluoride-specific ion channel FluC, found in Azotobacter vinelandii (strain DJ / ATCC BAA-1303).